Here is a 414-residue protein sequence, read N- to C-terminus: MTQANLSETLFKPRFKHPETSTLVRRFSHGAQPPVQSALDGKTIPHWYRMINRLMWIWRGIDPREILDVQARIVMSDAERTDDDLYDTVIGYRGGNWIYEWATQAMVWQQKACAEEDPQLSGRHWLHAATLYNIAAYPHLKGDDLAEQAQALSNRAYEEAAQRLPGTMRQMEFTVPGGAPITGFLHMPKGDGPFPTVLMCGGLDAMQTDYYSLYERYFAPRGIAMLTIDMPSVGFSSKWKLTQDSSLLHQHVLKALPNVPWVDHTRVAAFGFRFGANVAVRLAYLESPRLKVVACLGPVVHTLLSDFKCQQQVPEMYLDVLASRLGMHDASDEALRVELNRYSLKVQGLLGRRCPTPMLSGYWKNDPFSPEEDSRLITSSSADGKLLEIPFNPVYRNFDKGLQEITDWIEKRLC.

This sequence belongs to the FrsA family.

The catalysed reaction is a carboxylic ester + H2O = an alcohol + a carboxylate + H(+). In terms of biological role, catalyzes the hydrolysis of esters. In Escherichia coli O6:K15:H31 (strain 536 / UPEC), this protein is Esterase FrsA.